The primary structure comprises 201 residues: 3-isopropylmalate dehydratase small subunit (201 aa).

Belongs to the LeuD family. LeuD type 1 subfamily. As to quaternary structure, heterodimer of LeuC and LeuD.

The enzyme catalyses (2R,3S)-3-isopropylmalate = (2S)-2-isopropylmalate. Its pathway is amino-acid biosynthesis; L-leucine biosynthesis; L-leucine from 3-methyl-2-oxobutanoate: step 2/4. Its function is as follows. Catalyzes the isomerization between 2-isopropylmalate and 3-isopropylmalate, via the formation of 2-isopropylmaleate. The sequence is that of 3-isopropylmalate dehydratase small subunit from Shewanella sp. (strain MR-4).